The following is a 236-amino-acid chain: NAD(P)H-hydrate epimerase (236 aa).

Residues 11 to 217 enclose the YjeF N-terminal domain; sequence AAALDRELMS…SIAKKYDFDV (207 aa). 61-65 serves as a coordination point for (6S)-NADPHX; sequence NNGGD. K(+)-binding residues include asparagine 62 and aspartate 123. Residues 127–133 and aspartate 156 contribute to the (6S)-NADPHX site; that span reads GFSFSGE. Serine 159 serves as a coordination point for K(+).

The protein belongs to the NnrE/AIBP family. Requires K(+) as cofactor.

It localises to the cytoplasm. The protein localises to the mitochondrion. It catalyses the reaction (6R)-NADHX = (6S)-NADHX. The enzyme catalyses (6R)-NADPHX = (6S)-NADPHX. Functionally, catalyzes the epimerization of the S- and R-forms of NAD(P)HX, a damaged form of NAD(P)H that is a result of enzymatic or heat-dependent hydration. This is a prerequisite for the S-specific NAD(P)H-hydrate dehydratase to allow the repair of both epimers of NAD(P)HX. The chain is NAD(P)H-hydrate epimerase from Neurospora crassa (strain ATCC 24698 / 74-OR23-1A / CBS 708.71 / DSM 1257 / FGSC 987).